We begin with the raw amino-acid sequence, 441 residues long: Ribosomal protein uS12 methylthiotransferase RimO (441 aa).

The 111-residue stretch at 8–118 (PKIGFVSLGC…VLQHVHHYVP (111 aa)) folds into the MTTase N-terminal domain. [4Fe-4S] cluster-binding residues include cysteine 17, cysteine 53, cysteine 82, cysteine 150, cysteine 154, and cysteine 157. Residues 136–373 (LTPRHYAYLK…MQLQQQISAE (238 aa)) enclose the Radical SAM core domain. A TRAM domain is found at 376-441 (QEKVGREILV…DEYDLWGSRV (66 aa)).

Belongs to the methylthiotransferase family. RimO subfamily. Requires [4Fe-4S] cluster as cofactor.

Its subcellular location is the cytoplasm. The catalysed reaction is L-aspartate(89)-[ribosomal protein uS12]-hydrogen + (sulfur carrier)-SH + AH2 + 2 S-adenosyl-L-methionine = 3-methylsulfanyl-L-aspartate(89)-[ribosomal protein uS12]-hydrogen + (sulfur carrier)-H + 5'-deoxyadenosine + L-methionine + A + S-adenosyl-L-homocysteine + 2 H(+). In terms of biological role, catalyzes the methylthiolation of an aspartic acid residue of ribosomal protein uS12. This Salmonella heidelberg (strain SL476) protein is Ribosomal protein uS12 methylthiotransferase RimO.